Reading from the N-terminus, the 637-residue chain is Chaperone protein HtpG (637 aa).

Residues 1–348 form an a; substrate-binding region; the sequence is MAEAGQMEKH…SNDLPLNVSR (348 aa). A b region spans residues 349–565; the sequence is EILQDNKITR…DNDMSTQMAK (217 aa). The segment at 566–637 is c; the sequence is LMEAAGQAVP…TRLNKLMLNA (72 aa).

This sequence belongs to the heat shock protein 90 family. Homodimer.

It is found in the cytoplasm. Functionally, molecular chaperone. Has ATPase activity. The polypeptide is Chaperone protein HtpG (Idiomarina loihiensis (strain ATCC BAA-735 / DSM 15497 / L2-TR)).